Here is a 703-residue protein sequence, read N- to C-terminus: Elongation factor G (703 aa).

The region spanning 8–290 (ARYRNIGICA…AVIEYLPAPT (283 aa)) is the tr-type G domain. GTP contacts are provided by residues 17-24 (AHVDAGKT), 88-92 (DTPGH), and 142-145 (NKMD).

Belongs to the TRAFAC class translation factor GTPase superfamily. Classic translation factor GTPase family. EF-G/EF-2 subfamily.

It is found in the cytoplasm. Catalyzes the GTP-dependent ribosomal translocation step during translation elongation. During this step, the ribosome changes from the pre-translocational (PRE) to the post-translocational (POST) state as the newly formed A-site-bound peptidyl-tRNA and P-site-bound deacylated tRNA move to the P and E sites, respectively. Catalyzes the coordinated movement of the two tRNA molecules, the mRNA and conformational changes in the ribosome. The polypeptide is Elongation factor G (Teredinibacter turnerae (strain ATCC 39867 / T7901)).